A 189-amino-acid chain; its full sequence is Ribosome maturation factor RimP (189 aa).

Belongs to the RimP family.

The protein localises to the cytoplasm. Functionally, required for maturation of 30S ribosomal subunits. This is Ribosome maturation factor RimP from Corynebacterium kroppenstedtii (strain DSM 44385 / JCM 11950 / CIP 105744 / CCUG 35717).